A 247-amino-acid chain; its full sequence is Protein FAM133B (247 aa).

Disordered stretches follow at residues 19-38 (SRGP…NRPR) and 70-247 (KKEL…PDSP). Over residues 70-80 (KKELEKHREKL) the composition is skewed to basic and acidic residues. Position 82 is a phosphoserine (Ser82). Basic residues predominate over residues 89-102 (KKRQRKKKEKKKSG). Over residues 103–119 (RYSSSSSSSSDSSSSSS) the composition is skewed to low complexity. Over residues 128 to 140 (QGKRRKKKKNRSH) the composition is skewed to basic residues. The segment covering 165–176 (KDGTEKEKDIKG) has biased composition (basic and acidic residues). 4 positions are modified to phosphoserine: Ser191, Ser192, Ser194, and Ser196. Residues 211–221 (SSEEREKATEK) are compositionally biased toward basic and acidic residues. The span at 222-239 (TKKKKKHKKHSKKKKKKA) shows a compositional bias: basic residues.

The protein belongs to the FAM133 family.

The chain is Protein FAM133B (FAM133B) from Homo sapiens (Human).